We begin with the raw amino-acid sequence, 920 residues long: MLSSTAILKASGDVAINYQQYIYPIIINKLSTLNYTIKNKKYYSQYKYSIQFQNEFQKNLKIYNNSNNNNNNNNNNKINKNNNNNNNNISKFFIQNNNIDKKVLRHFYSSTKLNYAKQQQQLFKNNETFNETVGASLLPIINKLQENAALIGSEITLPQIIVVGSQSSGKSSVLENLVGRDFLPRGSGLVTRRPLVLQLYQTTTTSRNNVNENEDEDEDDNYYDNDNDDNSLEEWGEFGHTGTNRFNFQEIKEEIERETERIAGPNKDISSEPIVLKIYSPKVVPLTLVDLPGLTRVAIEDQPPDIEEKIKSMIIDYISNPNSIILAITPANQDIVTSDALKLAQQVDPLGKRTIGVLTKLDLMDKGTDAIDILLGNSIPLSLGFVGVVNRSQQDINNRKPIEQMLADEWKWFDQHPVYHRITNQLGTKYLAQKCNKILTKHIRDTFPSVKNQIRQLIKKYESDLEKYGEPIPLRSAEKSRLLLDILNEFSRKYRADLDGTNEELILNEFNGGARIRYIFSKAFQSTTAAAATTSTDNSGGGEPFGWLSDQQLKIALRNSGSTMFIPQKIFDSLIRKQLERVREPLIQTSEIILDELIRILTQADYSHVLSRFPILKERIVEVSNNALRKLVKECNQSISQMVDAEMSFINTNHPNYLYQLNNLLFSSSSSSFVVPQGAFQSTSSTSSSPTSSSSSLPLPQNSNPYNDALNPYNIDRSYPIDNQIKQQQQQQQQQQQQSYQQQQQQQQKQQSGFLSRIFGSSSSPPSPPSPPQPKQQQSHEIQIQQQQQQQQQQHLKKQNLIFDDKFKLEQYGLNDITEDEKKQIYLLRRLLLAYNDIAQFNLQQNTMKLVSLLLIDKSKDILQKELIDSLYDQSSVDQLLRENELVVAKRNECIYKLDLLKKAKKSLSQSENSDLLHLY.

The segment at 65 to 84 is disordered; that stretch reads NSNNNNNNNNNNKINKNNNN. The 295-residue stretch at 154–448 folds into the Dynamin-type G domain; sequence EITLPQIIVV…LTKHIRDTFP (295 aa). Positions 164–171 are G1 motif; it reads GSQSSGKS. 164–172 is a GTP binding site; it reads GSQSSGKSS. The tract at residues 190-192 is G2 motif; that stretch reads VTR. The tract at residues 204–241 is disordered; it reads TTSRNNVNENEDEDEDDNYYDNDNDDNSLEEWGEFGHT. Over residues 212 to 236 the composition is skewed to acidic residues; it reads ENEDEDEDDNYYDNDNDDNSLEEWG. The interval 290–293 is G3 motif; it reads DLPG. The G4 motif stretch occupies residues 359 to 362; that stretch reads TKLD. GTP is bound by residues 359 to 365 and 390 to 393; these read TKLDLMD and NRSQ. A G5 motif region spans residues 389-392; that stretch reads VNRS. Residues 680-790 are disordered; that stretch reads FQSTSSTSSS…EIQIQQQQQQ (111 aa). Low complexity-rich tracts occupy residues 681–705 and 724–751; these read QSTS…NSNP and QIKQ…QKQQ. Residues 724 to 751 adopt a coiled-coil conformation; the sequence is QIKQQQQQQQQQQQQSYQQQQQQQQKQQ. Positions 765 to 774 are enriched in pro residues; the sequence is PPSPPSPPQP. Positions 775–790 are enriched in low complexity; that stretch reads KQQQSHEIQIQQQQQQ. A GED domain is found at 825–916; it reads IYLLRRLLLA…SLSQSENSDL (92 aa).

It belongs to the TRAFAC class dynamin-like GTPase superfamily. Dynamin/Fzo/YdjA family.

It localises to the cytoplasm. Enzyme hydrolyzing GTP. The protein is Dynamin-B (dymB) of Dictyostelium discoideum (Social amoeba).